A 215-amino-acid chain; its full sequence is Protein GET1 (215 aa).

The Lumenal segment spans residues 1–4; it reads MPSL. Residues 5–24 form a helical membrane-spanning segment; it reads LILIFTIEVAVELINTIGAA. Topologically, residues 25–110 are cytoplasmic; sequence TINNLLWRIF…NFDKYITGIR (86 aa). The stretch at 72 to 104 forms a coiled coil; the sequence is AKWAKLRRQHDKLLEQLEKKKAALDSTKGNFDK. A helical membrane pass occupies residues 111-131; the sequence is WVGTQGLRYFLPFWYAKVPMF. The Lumenal segment spans residues 132–155; it reads WLPYGWFPYYAEWLVSFPRAPMGS. A helical membrane pass occupies residues 156–172; it reads VSIASWQLACTGFVVLI. At 173 to 215 the chain is on the cytoplasmic side; the sequence is KDAITALVVFVMGMRQSNVKQAVPVKAVSGEKASDEKEGKKEL.

It belongs to the WRB/GET1 family. As to quaternary structure, interacts with GET3.

The protein localises to the endoplasmic reticulum membrane. Functionally, required for the post-translational delivery of tail-anchored (TA) proteins to the endoplasmic reticulum. Acts as a membrane receptor for soluble GET3, which recognizes and selectively binds the transmembrane domain of TA proteins in the cytosol. The polypeptide is Protein GET1 (Pyricularia oryzae (strain 70-15 / ATCC MYA-4617 / FGSC 8958) (Rice blast fungus)).